Here is a 444-residue protein sequence, read N- to C-terminus: Sensor protein CiaH (444 aa).

Transmembrane regions (helical) follow at residues 21–41 (FGVF…VMHS) and 183–203 (LIVV…LYLA). A Histidine kinase domain is found at 223 to 438 (NASHELRTPL…IFEVKIAIQT (216 aa)). Phosphohistidine; by autocatalysis is present on H226.

It is found in the cell membrane. It catalyses the reaction ATP + protein L-histidine = ADP + protein N-phospho-L-histidine.. Functionally, member of the two-component regulatory system CiaH/CiaR. Involved in early steps of competence regulation and in penicillin susceptibility. Probably phosphorylates CiaR. This chain is Sensor protein CiaH (ciaH), found in Streptococcus pneumoniae serotype 4 (strain ATCC BAA-334 / TIGR4).